The chain runs to 492 residues: FAD-linked oxidoreductase pgmH (492 aa).

The FAD-binding PCMH-type domain maps to 54-224; that stretch reads SIRLATLVVY…TEFKYRVHKQ (171 aa).

This sequence belongs to the oxygen-dependent FAD-linked oxidoreductase family. FAD is required as a cofactor.

It participates in pigment biosynthesis. It functions in the pathway secondary metabolite biosynthesis. In terms of biological role, FAD-linked oxidoreductase; part of the gene cluster that mediates the biosynthesis of pleosporalin A, ascomycone A, as well as a third cryptic naphthoquinone derived pigment, all responsible for the coloration of conidia. Essential for the production of pleosporalin A, but not the 2 other final products. The pathway begins with the biosynthesis of the cyclized heptaketide 3-acetonyl-1,6,8-trihydroxy-2-naphthaldehyde by the NR-PKS pgmA. The C-6 hydroxyl group is further methylated by the O-methyltransferase pgmB to yield fusarubinaldehyde which is in turn oxidized by the cytochrome P450 monooxygenase pgmC at C-9. The C-1 hydroxyl group is then methylated spontaneously. Although pgmE, pgmD and pgmH are essential for the production of pleosporalin A, it is not the case for the 2 other final products and it remains difficult to assign a specific function to each enzyme. PgmF and pgmG seem not to be involved in pigment biosynthesis although they were regulated by the cluster-specific transcription factor pgmR. The sequence is that of FAD-linked oxidoreductase pgmH from Aspergillus terreus.